Here is a 394-residue protein sequence, read N- to C-terminus: Protein LAX PANICLE 2 (394 aa).

The tract at residues 1–193 is disordered; it reads MVPARSLAHP…PTPRHHHHDV (193 aa). The segment covering 8-20 has biased composition (basic residues); it reads AHPHPHLVRRRRD. The span at 60–84 shows a compositional bias: basic and acidic residues; the sequence is QHDPPKQPPPREADDDHHRIQEREP. Low complexity-rich tracts occupy residues 90 to 101, 119 to 131, and 146 to 155; these read TTTRNQRLQLQL, GTSG…SSSN, and GPASPGASAG. Pro residues predominate over residues 170-185; the sequence is APQPPTPTPTPTPTPT.

As to quaternary structure, interacts with LAX1.

It is found in the nucleus. In terms of biological role, involved in the regulation of shoot branching by controlling axillary meristem (AM) formation. Functions in association with LAX1 to regulate the process of AM formation. Possesses transactivation activity in yeast. The protein is Protein LAX PANICLE 2 of Oryza sativa subsp. japonica (Rice).